We begin with the raw amino-acid sequence, 677 residues long: DNA ligase (677 aa).

NAD(+)-binding positions include 32–36 (DSEYD), 81–82 (SL), and Glu-112. Lys-114 serves as the catalytic N6-AMP-lysine intermediate. Residues Arg-135, Glu-171, Lys-288, and Lys-312 each contribute to the NAD(+) site. 4 residues coordinate Zn(2+): Cys-416, Cys-419, Cys-434, and Cys-439. Residues 598-677 (YKPLPLSGVE…QEFINMLEQS (80 aa)) form the BRCT domain.

Belongs to the NAD-dependent DNA ligase family. LigA subfamily. The cofactor is Mg(2+). Mn(2+) is required as a cofactor.

It carries out the reaction NAD(+) + (deoxyribonucleotide)n-3'-hydroxyl + 5'-phospho-(deoxyribonucleotide)m = (deoxyribonucleotide)n+m + AMP + beta-nicotinamide D-nucleotide.. DNA ligase that catalyzes the formation of phosphodiester linkages between 5'-phosphoryl and 3'-hydroxyl groups in double-stranded DNA using NAD as a coenzyme and as the energy source for the reaction. It is essential for DNA replication and repair of damaged DNA. This is DNA ligase from Dehalococcoides mccartyi (strain ATCC BAA-2266 / KCTC 15142 / 195) (Dehalococcoides ethenogenes (strain 195)).